Reading from the N-terminus, the 301-residue chain is Sulfate adenylyltransferase subunit 2 (301 aa).

The protein belongs to the PAPS reductase family. CysD subfamily. Heterodimer composed of CysD, the smaller subunit, and CysN.

The enzyme catalyses sulfate + ATP + H(+) = adenosine 5'-phosphosulfate + diphosphate. The protein operates within sulfur metabolism; hydrogen sulfide biosynthesis; sulfite from sulfate: step 1/3. With CysN forms the ATP sulfurylase (ATPS) that catalyzes the adenylation of sulfate producing adenosine 5'-phosphosulfate (APS) and diphosphate, the first enzymatic step in sulfur assimilation pathway. APS synthesis involves the formation of a high-energy phosphoric-sulfuric acid anhydride bond driven by GTP hydrolysis by CysN coupled to ATP hydrolysis by CysD. This chain is Sulfate adenylyltransferase subunit 2, found in Citrifermentans bemidjiense (strain ATCC BAA-1014 / DSM 16622 / JCM 12645 / Bem) (Geobacter bemidjiensis).